The primary structure comprises 311 residues: MAWSTGQNLSTPGPFILLGFPGPRSMRIGLFLLFLVMYLLTVVGNLAIISLVGAHRCLQTPMYFFLCNLSFLEIWFTTACVPKTLATFAPRGGVISLAGCATQMYFVFSLGCTEYFLLAVMAYDRYLAICLPLRYGGIMTPGLAMRLALGSWLCGFSAITVPATLIARLSFCGSRVINHFFCDISPWIVLSCTDTQVVELVSFGIAFCVILGSCGITLVSYAYIITTIIKIPSARGRHRAFSTCSSHLTVVLIWYGSTIFLHVRTSVESSLDLTKAITVLNTIVTPVLNPFIYTLRNKDVKEALRRTVKGK.

Topologically, residues 1 to 27 (MAWSTGQNLSTPGPFILLGFPGPRSMR) are extracellular. N-linked (GlcNAc...) asparagine glycosylation occurs at Asn-8. The helical transmembrane segment at 28–53 (IGLFLLFLVMYLLTVVGNLAIISLVG) threads the bilayer. Topologically, residues 54-60 (AHRCLQT) are cytoplasmic. A helical transmembrane segment spans residues 61–82 (PMYFFLCNLSFLEIWFTTACVP). The Extracellular segment spans residues 83–103 (KTLATFAPRGGVISLAGCATQ). Cys-100 and Cys-192 are joined by a disulfide. The chain crosses the membrane as a helical span at residues 104 to 123 (MYFVFSLGCTEYFLLAVMAY). The Cytoplasmic portion of the chain corresponds to 124–142 (DRYLAICLPLRYGGIMTPG). The helical transmembrane segment at 143-161 (LAMRLALGSWLCGFSAITV) threads the bilayer. Residues 162–199 (PATLIARLSFCGSRVINHFFCDISPWIVLSCTDTQVVE) are Extracellular-facing. Residues 200-222 (LVSFGIAFCVILGSCGITLVSYA) traverse the membrane as a helical segment. Residues 223 to 239 (YIITTIIKIPSARGRHR) lie on the Cytoplasmic side of the membrane. Residues 240–263 (AFSTCSSHLTVVLIWYGSTIFLHV) form a helical membrane-spanning segment. The Extracellular portion of the chain corresponds to 264-275 (RTSVESSLDLTK). A helical transmembrane segment spans residues 276–295 (AITVLNTIVTPVLNPFIYTL). Topologically, residues 296 to 311 (RNKDVKEALRRTVKGK) are cytoplasmic.

This sequence belongs to the G-protein coupled receptor 1 family. Olfactory epithelium.

It is found in the cell membrane. Functionally, odorant receptor. The polypeptide is Olfactory receptor 287 (Olr287) (Rattus norvegicus (Rat)).